We begin with the raw amino-acid sequence, 736 residues long: DEAD-box ATP-dependent RNA helicase 21 (736 aa).

The stretch at 14-38 forms a coiled coil; it reads LTREEREKLALERRQAAVTDQRRSA. Positions 25 to 38 are enriched in basic and acidic residues; the sequence is ERRQAAVTDQRRSA. 2 disordered regions span residues 25 to 178 and 231 to 263; these read ERRQ…PKKR and KVAAAHEKETRAEQRRKAGLDDRPEDDAVDKKE. The span at 46–58 shows a compositional bias: pro residues; it reads PRPPPPPPPPLSN. Composition is skewed to basic and acidic residues over residues 64–166 and 231–252; these read SSSH…DAIK and KVAAAHEKETRAEQRRKAGLDD. Residues 137-167 are a coiled coil; it reads DRDRERGDREKDRLEKMAEREREKELDAIKE. The Q motif signature appears at 315-343; that stretch reads RKWSESKLGTELLRAVEKAGYKEPSPIQM. In terms of domain architecture, Helicase ATP-binding spans 346–541; it reads IPLGLQQRDV…RKYLRNPVVV (196 aa). 359–366 provides a ligand contact to ATP; it reads AETGSGKT. Residues 472-475 carry the DEAD box motif; that stretch reads DEAD. The 145-residue stretch at 568-712 folds into the Helicase C-terminal domain; the sequence is RLQKILTDLG…PVPPELARHE (145 aa). Residues 704-736 are disordered; that stretch reads VPPELARHEASKFKPGSVPDRPPRRNDTVYATH.

The protein belongs to the DEAD box helicase family. DDX23/PRP28 subfamily.

It is found in the cytoplasm. The protein localises to the nucleus. It carries out the reaction ATP + H2O = ADP + phosphate + H(+). Functionally, ATP-dependent RNA helicase involved in mRNA splicing. May destabilize the U1/5'-splice site duplex to permit an effective competition for the 5'-splice site by the U6 snRNA, resulting in the switch between U1 and U6 at the 5'-splice site. May also act to unwind the U4/U6 base-pairing interaction in the U4/U6/U5 snRNP, facilitating the first covalent step of splicing. This chain is DEAD-box ATP-dependent RNA helicase 21, found in Oryza sativa subsp. japonica (Rice).